The following is a 274-amino-acid chain: NADPH-dependent 7-cyano-7-deazaguanine reductase (274 aa).

80 to 82 (VES) lines the substrate pocket. 82–83 (SK) provides a ligand contact to NADPH. Residue Cys181 is the Thioimide intermediate of the active site. Catalysis depends on Asp188, which acts as the Proton donor. Position 220–221 (220–221 (HE)) interacts with substrate. 249–250 (RG) provides a ligand contact to NADPH.

It belongs to the GTP cyclohydrolase I family. QueF type 2 subfamily. As to quaternary structure, homodimer.

The protein localises to the cytoplasm. The enzyme catalyses 7-aminomethyl-7-carbaguanine + 2 NADP(+) = 7-cyano-7-deazaguanine + 2 NADPH + 3 H(+). Its pathway is tRNA modification; tRNA-queuosine biosynthesis. In terms of biological role, catalyzes the NADPH-dependent reduction of 7-cyano-7-deazaguanine (preQ0) to 7-aminomethyl-7-deazaguanine (preQ1). This Burkholderia ambifaria (strain ATCC BAA-244 / DSM 16087 / CCUG 44356 / LMG 19182 / AMMD) (Burkholderia cepacia (strain AMMD)) protein is NADPH-dependent 7-cyano-7-deazaguanine reductase.